We begin with the raw amino-acid sequence, 393 residues long: S-adenosylmethionine synthase 2 (393 aa).

Residue Glu9 coordinates Mg(2+). His15 contacts ATP. Glu43 contributes to the K(+) binding site. 2 residues coordinate L-methionine: Glu56 and Gln99. Residues Asp167–Lys169, Ser235–Phe238, Asp246, Arg252–Met253, Ala269, Lys273, and Lys277 each bind ATP. L-methionine is bound at residue Asp246. An L-methionine-binding site is contributed by Lys277.

The protein belongs to the AdoMet synthase family. In terms of assembly, homotetramer. Mn(2+) is required as a cofactor. The cofactor is Mg(2+). Co(2+) serves as cofactor. It depends on K(+) as a cofactor.

It is found in the cytoplasm. The catalysed reaction is L-methionine + ATP + H2O = S-adenosyl-L-methionine + phosphate + diphosphate. It participates in amino-acid biosynthesis; S-adenosyl-L-methionine biosynthesis; S-adenosyl-L-methionine from L-methionine: step 1/1. Functionally, catalyzes the formation of S-adenosylmethionine from methionine and ATP. The reaction comprises two steps that are both catalyzed by the same enzyme: formation of S-adenosylmethionine (AdoMet) and triphosphate, and subsequent hydrolysis of the triphosphate. The protein is S-adenosylmethionine synthase 2 (SAMS2) of Daucus carota (Wild carrot).